We begin with the raw amino-acid sequence, 343 residues long: Heat-inducible transcription repressor HrcA (343 aa).

The protein belongs to the HrcA family.

Its function is as follows. Negative regulator of class I heat shock genes (grpE-dnaK-dnaJ and groELS operons). Prevents heat-shock induction of these operons. The polypeptide is Heat-inducible transcription repressor HrcA (Bacillus subtilis (strain 168)).